We begin with the raw amino-acid sequence, 144 residues long: Probable nucleoside diphosphate kinase 5 (144 aa).

6 residues coordinate ATP: lysine 3, phenylalanine 51, arginine 79, threonine 85, arginine 99, and asparagine 109. Histidine 112 serves as the catalytic Pros-phosphohistidine intermediate.

The protein belongs to the NDK family.

It catalyses the reaction a 2'-deoxyribonucleoside 5'-diphosphate + ATP = a 2'-deoxyribonucleoside 5'-triphosphate + ADP. The catalysed reaction is a ribonucleoside 5'-diphosphate + ATP = a ribonucleoside 5'-triphosphate + ADP. Functionally, involved in the synthesis of nucleoside triphosphates other than ATP. The ATP gamma phosphate is transferred to the NDP beta phosphate via a ping-pong mechanism, using a phosphorylated active-site intermediate. In Arabidopsis thaliana (Mouse-ear cress), this protein is Probable nucleoside diphosphate kinase 5.